Here is a 619-residue protein sequence, read N- to C-terminus: Chaperone protein HscA homolog (619 aa).

This sequence belongs to the heat shock protein 70 family.

In terms of biological role, chaperone involved in the maturation of iron-sulfur cluster-containing proteins. Has a low intrinsic ATPase activity which is markedly stimulated by HscB. The sequence is that of Chaperone protein HscA homolog from Pseudomonas aeruginosa (strain LESB58).